We begin with the raw amino-acid sequence, 357 residues long: Alanine racemase (357 aa).

The active-site Proton acceptor; specific for D-alanine is lysine 33. The residue at position 33 (lysine 33) is an N6-(pyridoxal phosphate)lysine. A substrate-binding site is contributed by arginine 129. The Proton acceptor; specific for L-alanine role is filled by tyrosine 253. Methionine 301 contacts substrate.

The protein belongs to the alanine racemase family. Homodimer. Requires pyridoxal 5'-phosphate as cofactor.

It catalyses the reaction L-alanine = D-alanine. It functions in the pathway amino-acid biosynthesis; D-alanine biosynthesis; D-alanine from L-alanine: step 1/1. Functionally, catalyzes the interconversion of L-alanine and D-alanine. Is highly specific for alanine as substrate. May serve both anabolic and catabolic purposes. The polypeptide is Alanine racemase (Pseudomonas taetrolens).